The primary structure comprises 1315 residues: Serine-aspartate repeat-containing protein D (1315 aa).

Positions 1-35 are cleaved as a signal peptide; it reads MLNRENKTAITRKGMVSNRLNKFSIRKYTVGTASI. Residues 23–34 carry the YSIRK-G/S signaling motif motif; that stretch reads FSIRKYTVGTAS. The segment at 36 to 568 is ligand binding A region; it reads LVGTTLIFGL…NNQSGGAGQE (533 aa). The disordered stretch occupies residues 54–185; it reads ESTNKELNEA…NKKVDAKTES (132 aa). Polar residues-rich tracts occupy residues 62–71 and 94–108; these read EATTSASDNQ and EMVS…SNGN. A compositionally biased stretch (basic and acidic residues) spans 130–145; it reads KSDEQASPKSTNEDLN. Polar residues-rich tracts occupy residues 146-155 and 163-173; these read TKQTISNQEA and NKSVVNVQPTN. A compositionally biased stretch (basic and acidic residues) spans 174–183; sequence EENKKVDAKT. 5 CNA-B domains span residues 569-680, 681-791, 792-901, 902-1012, and 1013-1123; these read VYKI…IYKP, KYNL…YKTP, KYNL…FYKP, TYNL…YKTP, and KYSL…EEET. Disordered stretches follow at residues 857-883, 972-992, and 1078-1291; these read ETPS…TSTT, YTPT…GLTT, and EKPA…SNNA. Polar residues-rich tracts occupy residues 860-869 and 972-981; these read SGYTPTQVGS and YTPTSVTSGN. Acidic residues-rich tracts occupy residues 1091 to 1101, 1118 to 1134, 1142 to 1164, and 1172 to 1254; these read TEDDKDADGGE, YYEE…DSDS, and SDSD…DSDS. An LPXTG sorting signal motif is present at residues 1278–1282; it reads LPETG. The residue at position 1281 (threonine 1281) is a Pentaglycyl murein peptidoglycan amidated threonine. Positions 1282–1315 are cleaved as a propeptide — removed by sortase; that stretch reads GNENSGSNNATLFGGLFAALGSLLLFGRRKKQNK.

The protein belongs to the serine-aspartate repeat-containing protein (SDr) family. In terms of assembly, interacts with host DSG1; this interaction increases S.aureus adherence to keratinocytes. Anchored to the cell wall by sortase A.

The protein localises to the secreted. The protein resides in the cell wall. Cell surface-associated calcium-binding protein which plays an important role in adhesion and pathogenesis. Mediates interactions with components of the extracellular matrix such as host DSG1 to promote bacterial adhesion to host cells. Contributes to the resistance to killing by innate immune components such as neutrophils present in blood and thus attenuates bacterial clearance. In Staphylococcus aureus (strain Newman), this protein is Serine-aspartate repeat-containing protein D (sdrD).